The following is a 488-amino-acid chain: Transmembrane protein 39A (488 aa).

Residues asparagine 31 and asparagine 39 are each glycosylated (N-linked (GlcNAc...) asparagine). Transmembrane regions (helical) follow at residues 72 to 92, 110 to 130, 154 to 174, 182 to 202, 287 to 307, 319 to 339, 420 to 440, and 446 to 466; these read SLLFEFLFFIYLLVALFIQYI, TSLNFHLIDYHLAAFITVMLA, VLISARLVLLTLCGWVLCWTL, SVLNLLFLGYPFGVYVPLCCF, EVLFNSLFSAYYVAFLPLCFV, CEHLIMVWINAFVMLTTQLLP, LLNLLILIEGSVVFYQLYSLL, and NHTLSMALILFCNYYVLFKLL.

It belongs to the TMEM39 family. Interacts with SACM1L, SEC23A and SEC24A.

It is found in the endoplasmic reticulum membrane. Regulates autophagy by controlling the spatial distribution and levels of the intracellular phosphatidylinositol 4-phosphate (PtdIns(4)P) pools. Modulates (PtdIns(4)P) levels by regulating the ER-to-Golgi trafficking of the phosphatidylinositide phosphatase SACM1L. The polypeptide is Transmembrane protein 39A (TMEM39A) (Bos taurus (Bovine)).